The following is a 269-amino-acid chain: Formamidopyrimidine-DNA glycosylase (269 aa).

Residue Pro2 is the Schiff-base intermediate with DNA of the active site. Glu3 functions as the Proton donor in the catalytic mechanism. Lys57 functions as the Proton donor; for beta-elimination activity in the catalytic mechanism. His90, Arg109, and Lys150 together coordinate DNA. The segment at 235-269 (QVYGRKGEPCRVCGTPIVATKHAQRATFYCRQCQK) adopts an FPG-type zinc-finger fold. Catalysis depends on Arg259, which acts as the Proton donor; for delta-elimination activity.

Belongs to the FPG family. Monomer. It depends on Zn(2+) as a cofactor.

It carries out the reaction Hydrolysis of DNA containing ring-opened 7-methylguanine residues, releasing 2,6-diamino-4-hydroxy-5-(N-methyl)formamidopyrimidine.. It catalyses the reaction 2'-deoxyribonucleotide-(2'-deoxyribose 5'-phosphate)-2'-deoxyribonucleotide-DNA = a 3'-end 2'-deoxyribonucleotide-(2,3-dehydro-2,3-deoxyribose 5'-phosphate)-DNA + a 5'-end 5'-phospho-2'-deoxyribonucleoside-DNA + H(+). Functionally, involved in base excision repair of DNA damaged by oxidation or by mutagenic agents. Acts as a DNA glycosylase that recognizes and removes damaged bases. Has a preference for oxidized purines, such as 7,8-dihydro-8-oxoguanine (8-oxoG). Has AP (apurinic/apyrimidinic) lyase activity and introduces nicks in the DNA strand. Cleaves the DNA backbone by beta-delta elimination to generate a single-strand break at the site of the removed base with both 3'- and 5'-phosphates. The polypeptide is Formamidopyrimidine-DNA glycosylase (Escherichia coli O6:K15:H31 (strain 536 / UPEC)).